Reading from the N-terminus, the 182-residue chain is Adenylate kinase (182 aa).

12–17 (GAGKGT) serves as a coordination point for ATP. Residues 32 to 61 (STGDLLRTEVGAKTPLGQEAAAVMNRGELV) are NMP. AMP-binding positions include Thr-33, Arg-38, 59 to 61 (ELV), 85 to 88 (GFPR), and Gln-92. An LID region spans residues 126–132 (SRGRSDD). ATP is bound at residue Arg-127. Residues Arg-129 and Arg-140 each contribute to the AMP site. Gly-168 serves as a coordination point for ATP.

The protein belongs to the adenylate kinase family. In terms of assembly, monomer.

Its subcellular location is the cytoplasm. It catalyses the reaction AMP + ATP = 2 ADP. It participates in purine metabolism; AMP biosynthesis via salvage pathway; AMP from ADP: step 1/1. Its function is as follows. Catalyzes the reversible transfer of the terminal phosphate group between ATP and AMP. Plays an important role in cellular energy homeostasis and in adenine nucleotide metabolism. The polypeptide is Adenylate kinase (Prochlorococcus marinus (strain MIT 9313)).